The chain runs to 818 residues: Fibrous sheath CABYR-binding protein (818 aa).

Residues 1–61 form a disordered region; that stretch reads MEEKDESEQS…PKAALSIGNI (61 aa). 3 positions are modified to phosphoserine: S25, S57, and S182. Disordered regions lie at residues 195 to 727 and 773 to 805; these read SFSK…PFIT and LESGNLDDKPKSEEPLERDTIPKDSSGTKNEGV. 3 stretches are compositionally biased toward low complexity: residues 490 to 511, 544 to 560, and 697 to 715; these read SPPAEEVPAGEPPEVQSPPAEE, EAPAGEPSEVQSPPAEE, and AELQPPSTEETTSEMVSVE. Residues 773-794 show a composition bias toward basic and acidic residues; it reads LESGNLDDKPKSEEPLERDTIP.

In terms of assembly, interacts with CABYR. Interacts with ROPN1 and ROPN1L; the interaction increases upon spermatozoa capacitation conditions. Phosphorylated by PKA upon spermatozoa capacitation conditions.

It localises to the cell projection. Its subcellular location is the cilium. It is found in the flagellum. In terms of biological role, may be involved in the later stages of fibrous sheath biogenesis and spermatozoa capacitation. Inhibits ROPN1 and ROPN1L SUMOylation. Binds calcium. The protein is Fibrous sheath CABYR-binding protein of Bos taurus (Bovine).